The following is a 300-amino-acid chain: 4-hydroxy-tetrahydrodipicolinate synthase (300 aa).

Residue Thr49 coordinates pyruvate. Catalysis depends on Tyr137, which acts as the Proton donor/acceptor. Catalysis depends on Lys165, which acts as the Schiff-base intermediate with substrate. Ile207 provides a ligand contact to pyruvate.

It belongs to the DapA family. As to quaternary structure, homotetramer; dimer of dimers.

The protein resides in the cytoplasm. It catalyses the reaction L-aspartate 4-semialdehyde + pyruvate = (2S,4S)-4-hydroxy-2,3,4,5-tetrahydrodipicolinate + H2O + H(+). It functions in the pathway amino-acid biosynthesis; L-lysine biosynthesis via DAP pathway; (S)-tetrahydrodipicolinate from L-aspartate: step 3/4. In terms of biological role, catalyzes the condensation of (S)-aspartate-beta-semialdehyde [(S)-ASA] and pyruvate to 4-hydroxy-tetrahydrodipicolinate (HTPA). This is 4-hydroxy-tetrahydrodipicolinate synthase from Nitrosospira multiformis (strain ATCC 25196 / NCIMB 11849 / C 71).